The primary structure comprises 296 residues: NAD kinase (296 aa).

Catalysis depends on Asp72, which acts as the Proton acceptor. Residues 72-73 (DG), 146-147 (ND), Arg157, Lys174, Asp176, 187-192 (TAYALS), and Gln247 contribute to the NAD(+) site.

This sequence belongs to the NAD kinase family. The cofactor is a divalent metal cation.

The protein resides in the cytoplasm. The catalysed reaction is NAD(+) + ATP = ADP + NADP(+) + H(+). In terms of biological role, involved in the regulation of the intracellular balance of NAD and NADP, and is a key enzyme in the biosynthesis of NADP. Catalyzes specifically the phosphorylation on 2'-hydroxyl of the adenosine moiety of NAD to yield NADP. This is NAD kinase from Pseudomonas syringae pv. tomato (strain ATCC BAA-871 / DC3000).